Consider the following 384-residue polypeptide: Beta-lactamase (384 aa).

Positions Met-1–Ala-29 are cleaved as a signal peptide. Ser-87 (acyl-ester intermediate) is an active-site residue. The active-site Proton acceptor is the Tyr-172. Lys-337–Gly-339 serves as a coordination point for substrate.

Belongs to the class-C beta-lactamase family.

The protein localises to the periplasm. The enzyme catalyses a beta-lactam + H2O = a substituted beta-amino acid. Its function is as follows. This protein is a serine beta-lactamase with a substrate specificity for cephalosporins. The protein is Beta-lactamase (ampC) of Providencia stuartii.